The following is a 49-amino-acid chain: ADDKNPLEECFREDDYEGFLEIAKNGLSTTSNPKRVVIVGAGMSGLAAY.

43–44 (MS) contributes to the FAD binding site.

Belongs to the flavin monoamine oxidase family. FIG1 subfamily. In terms of assembly, homodimer; non-covalently linked. The cofactor is FAD. In terms of processing, N-glycosylated. As to expression, expressed by the venom gland.

It is found in the secreted. It catalyses the reaction an L-alpha-amino acid + O2 + H2O = a 2-oxocarboxylate + H2O2 + NH4(+). The enzyme catalyses L-leucine + O2 + H2O = 4-methyl-2-oxopentanoate + H2O2 + NH4(+). Catalyzes an oxidative deamination of predominantly hydrophobic and aromatic L-amino acids, thus producing hydrogen peroxide that may contribute to the diverse toxic effects of this enzyme. Shows activity on L-Leu. Exhibits diverse biological activities, such as hemorrhage, hemolysis, edema, antibacterial and antiparasitic activities, as well as regulation of platelet aggregation. Its effect on platelets is controversial, since it either induces aggregation or inhibits agonist-induced aggregation. These different effects are probably due to different experimental conditions. In addition, this protein induces apoptosis and necrosis and has inhibitory effects on rat kidney function (decrease of blood flow and glomerular filtration). This is L-amino-acid oxidase from Bothrops insularis (Golden lancehead).